The following is a 299-amino-acid chain: Phosphoribosylaminoimidazole-succinocarboxamide synthase (299 aa).

Belongs to the SAICAR synthetase family.

It catalyses the reaction 5-amino-1-(5-phospho-D-ribosyl)imidazole-4-carboxylate + L-aspartate + ATP = (2S)-2-[5-amino-1-(5-phospho-beta-D-ribosyl)imidazole-4-carboxamido]succinate + ADP + phosphate + 2 H(+). Its pathway is purine metabolism; IMP biosynthesis via de novo pathway; 5-amino-1-(5-phospho-D-ribosyl)imidazole-4-carboxamide from 5-amino-1-(5-phospho-D-ribosyl)imidazole-4-carboxylate: step 1/2. In Streptomyces coelicolor (strain ATCC BAA-471 / A3(2) / M145), this protein is Phosphoribosylaminoimidazole-succinocarboxamide synthase.